We begin with the raw amino-acid sequence, 285 residues long: Protease HtpX homolog (285 aa).

Helical transmembrane passes span 7–27 and 30–50; these read TAML…MIGG and GMTI…WFSD. Histidine 131 contributes to the Zn(2+) binding site. Glutamate 132 is a catalytic residue. Residue histidine 135 participates in Zn(2+) binding. 2 helical membrane passes run 146–166 and 177–197; these read ISAT…FFGG and IAGI…QMAI. Glutamate 202 is a binding site for Zn(2+).

The protein belongs to the peptidase M48B family. It depends on Zn(2+) as a cofactor.

The protein localises to the cell inner membrane. This chain is Protease HtpX homolog, found in Burkholderia mallei (strain NCTC 10247).